The primary structure comprises 153 residues: NADPH-dependent 7-cyano-7-deazaguanine reductase (153 aa).

The active-site Thioimide intermediate is Cys-51. Residue Asp-58 is the Proton donor of the active site. Substrate contacts are provided by residues 73-75 and 92-93; these read VES and HE.

It belongs to the GTP cyclohydrolase I family. QueF type 1 subfamily.

It is found in the cytoplasm. The enzyme catalyses 7-aminomethyl-7-carbaguanine + 2 NADP(+) = 7-cyano-7-deazaguanine + 2 NADPH + 3 H(+). Its pathway is tRNA modification; tRNA-queuosine biosynthesis. Functionally, catalyzes the NADPH-dependent reduction of 7-cyano-7-deazaguanine (preQ0) to 7-aminomethyl-7-deazaguanine (preQ1). This is NADPH-dependent 7-cyano-7-deazaguanine reductase from Granulibacter bethesdensis (strain ATCC BAA-1260 / CGDNIH1).